A 224-amino-acid polypeptide reads, in one-letter code: MSEKTDKTEKKQKKAEETVETASAEAAPAKKGGKKQAAKPAEGAPADEAARKGGKGKKPAAEEKPKDEIKYIVRIANTDLDGTQTVEFALTGIKGIGNRISKIIARQAQVDPHATMGYLPPEQVDKLRAVIDNLEANVPVWMLNRRRDIYTGEDKHLYGVDLTMAVKEDINIMKKIRSYKGIRHERGQKVRGQRTKSTGRTGATVGVVRKKGEQGGAAKKEDKK.

The segment covering 1-17 has biased composition (basic and acidic residues); that stretch reads MSEKTDKTEKKQKKAEE. Disordered regions lie at residues 1–64 and 184–224; these read MSEK…AEEK and HERG…EDKK. 2 stretches are compositionally biased toward low complexity: residues 20 to 30 and 38 to 47; these read ETASAEAAPAK and AKPAEGAPAD. The span at 210–224 shows a compositional bias: basic and acidic residues; the sequence is KKGEQGGAAKKEDKK.

It belongs to the universal ribosomal protein uS13 family. As to quaternary structure, part of the 30S ribosomal subunit. Forms a loose heterodimer with protein S19. Forms two bridges to the 50S subunit in the 70S ribosome.

Located at the top of the head of the 30S subunit, it contacts several helices of the 16S rRNA. In the 70S ribosome it contacts the 23S rRNA (bridge B1a) and protein L5 of the 50S subunit (bridge B1b), connecting the 2 subunits; these bridges are implicated in subunit movement. The polypeptide is Small ribosomal subunit protein uS13 (Methanocella arvoryzae (strain DSM 22066 / NBRC 105507 / MRE50)).